Here is a 1118-residue protein sequence, read N- to C-terminus: MESGDHLGNLFDDMVEEDNDEDSFEEPACEDSFDSQEASSKANEPQNDSFDEPIQSSVSKQSDDANGEDEINEEVIQEQKELDLNEEDFNLLTIEEVPLDVLTARIRRVFTEVTYRAEPAAIALFDVAHKIIFKSTMLDCKRNTVIDSIIEGLISIIVDERERDQGAEEAEHVLMIFIAKLAIKNKSMKCSDLLYKLILLVDRLYLHADSFVRCRIYRLIACLMEEANRYADVMREHGDDAFLSDEDPTESEVMIPSGVKNRWMGKLAKSLLDKSPEVRCKAVIALSLWDHDIECKTTCCDEVTVNDLLWKSVHDVDESVRVNAARRVHIANENDIDKCIDYVETSKDNRVKQAIIVRLASDVSLLSFSEKQRFRLVNLLNNSDSARVQDVIHQLLVESWMKVAGDEIISPSIFPFPDSDNNNIPKEFPSIILEYLDPLVDPTAVYVFMKFATVRFIQKSTVQQACGSLDVEKFMKDLLSMTIPDCERVGLMRRTTFRLIPKDNNDGNEDIRKIFSRIFISRCFVDVIFNFAKGRLDATHLRSRALTFFLPDVTTFVEHLEKFCDAYFHRNMSTDYTCKDLVLYNLLHLMNVATKYGDLHDDKMLYKHALKKILGNSSFVFSSETILTIVMICFDLCKIGDDVKQLCDWMCDTAKQLMLSHEEVLNLEEAMKNDKVLEQMYLRSATMLLATCKHEEVESPTASMSSLFKTIIPALLGNKNEELQQLGLELIGFATSIDFENCEPYLKLTTLLIQRGDEVLTSTGVNTLIKVIKSQGFPKTANAIFQGEEQTEDDCQDALAKVFEKALVSLQGMALVQSVQDCLSMLSYGRYAWSKLMCAIIMLVFQKSNECLPLVKIFASYCKKSIRSDFNKMNLLLGFCRAVGIISKTGEDDSNIKLLEMTELVCECISSVHTIDGDEVIPQKKRKTDNEEELYPEIVLANRMVGRANSHPSSWIIRHVFTAMATSLRLECVPMKIVDTLHELLVDTYTVVRFNSNKTTQIAFKRFLTHCEKVITLHERMNALKLGVDFKKVKKEVICADEDPKSVSSSSSLGRKRGRKRENSEEEEKIDADDSFELFQYVPKSTRTRIRPTVNVEEDQNIKTEIEDSDDLEDSFEL.

3 disordered regions span residues 1 to 69 (MESG…NGED), 1044 to 1071 (PKSV…EKID), and 1090 to 1118 (IRPT…SFEL). The span at 13 to 34 (DMVEEDNDEDSFEEPACEDSFD) shows a compositional bias: acidic residues. A compositionally biased stretch (polar residues) spans 35-60 (SQEASSKANEPQNDSFDEPIQSSVSK). Residues 1107–1118 (EDSDDLEDSFEL) are compositionally biased toward acidic residues.

This is an uncharacterized protein from Caenorhabditis elegans.